The primary structure comprises 90 residues: uncharacterized protein (90 aa).

2 consecutive transmembrane segments (helical) span residues 23 to 43 and 48 to 68; these read ITTI…VGLF and VTLL…IIGF.

Its subcellular location is the cell membrane. This is an uncharacterized protein from Rickettsia prowazekii (strain Madrid E).